Here is a 449-residue protein sequence, read N- to C-terminus: Exodeoxyribonuclease 7 large subunit (449 aa).

Belongs to the XseA family. Heterooligomer composed of large and small subunits.

The protein resides in the cytoplasm. The enzyme catalyses Exonucleolytic cleavage in either 5'- to 3'- or 3'- to 5'-direction to yield nucleoside 5'-phosphates.. In terms of biological role, bidirectionally degrades single-stranded DNA into large acid-insoluble oligonucleotides, which are then degraded further into small acid-soluble oligonucleotides. The sequence is that of Exodeoxyribonuclease 7 large subunit from Salmonella paratyphi A (strain ATCC 9150 / SARB42).